The chain runs to 458 residues: Argininosuccinate lyase (458 aa).

The protein belongs to the lyase 1 family. Argininosuccinate lyase subfamily.

Its subcellular location is the cytoplasm. It catalyses the reaction 2-(N(omega)-L-arginino)succinate = fumarate + L-arginine. It participates in amino-acid biosynthesis; L-arginine biosynthesis; L-arginine from L-ornithine and carbamoyl phosphate: step 3/3. This is Argininosuccinate lyase from Actinobacillus pleuropneumoniae serotype 7 (strain AP76).